The chain runs to 464 residues: Glutamate--tRNA ligase (464 aa).

Positions 8–18 (PSPTGYMHLGN) match the 'HIGH' region motif. Residues Cys96, Cys98, Cys123, and His125 each coordinate Zn(2+). The short motif at 240-244 (KLSKR) is the 'KMSKS' region element. Lys243 contacts ATP.

This sequence belongs to the class-I aminoacyl-tRNA synthetase family. Glutamate--tRNA ligase type 1 subfamily. As to quaternary structure, monomer. Zn(2+) is required as a cofactor.

It is found in the cytoplasm. The enzyme catalyses tRNA(Glu) + L-glutamate + ATP = L-glutamyl-tRNA(Glu) + AMP + diphosphate. In terms of biological role, catalyzes the attachment of glutamate to tRNA(Glu) in a two-step reaction: glutamate is first activated by ATP to form Glu-AMP and then transferred to the acceptor end of tRNA(Glu). The sequence is that of Glutamate--tRNA ligase from Hydrogenobaculum sp. (strain Y04AAS1).